A 363-amino-acid polypeptide reads, in one-letter code: Ribosome-binding ATPase YchF (363 aa).

An OBG-type G domain is found at 3–256; sequence FKCGIVGLPN…LDDEERDEFM (254 aa). 12-17 contributes to the ATP binding site; that stretch reads NVGKST. Mg(2+) contacts are provided by serine 16 and threonine 36. Residues 278–361 form the TGS domain; that stretch reads NLQTYFTAGV…KDGDVMNFLF (84 aa).

This sequence belongs to the TRAFAC class OBG-HflX-like GTPase superfamily. OBG GTPase family. YchF/OLA1 subfamily. Mg(2+) is required as a cofactor.

Functionally, ATPase that binds to both the 70S ribosome and the 50S ribosomal subunit in a nucleotide-independent manner. This is Ribosome-binding ATPase YchF from Escherichia coli O157:H7.